Consider the following 138-residue polypeptide: MTQMTVQVVTPDGIKYDHQAKFISVETTDGEMGILPRHINLIAPLVIHEMKIRRTDDDNHVDWVAINGGIIEIKDNVVTIVADSAERSRDIDVSRAERAKLRAEREIEAAKSAHDIDEVQRAQVALRRALNRINVGNK.

Belongs to the ATPase epsilon chain family. In terms of assembly, F-type ATPases have 2 components, CF(1) - the catalytic core - and CF(0) - the membrane proton channel. CF(1) has five subunits: alpha(3), beta(3), gamma(1), delta(1), epsilon(1). CF(0) has three main subunits: a, b and c.

It is found in the cell membrane. Produces ATP from ADP in the presence of a proton gradient across the membrane. This is ATP synthase epsilon chain from Streptococcus uberis (strain ATCC BAA-854 / 0140J).